The chain runs to 901 residues: Protein translocase subunit SecA (901 aa).

ATP is bound by residues Gln-87, 105 to 109, and Asp-512; that span reads GEGKT. Residues 858-891 form a disordered region; sequence SHQDDDTAAAAALAAQTGDRKVGRNDPCPCGSGK. Residues Cys-885, Cys-887, Cys-896, and His-897 each coordinate Zn(2+).

Belongs to the SecA family. As to quaternary structure, monomer and homodimer. Part of the essential Sec protein translocation apparatus which comprises SecA, SecYEG and auxiliary proteins SecDF-YajC and YidC. It depends on Zn(2+) as a cofactor.

It is found in the cell inner membrane. Its subcellular location is the cytoplasm. It catalyses the reaction ATP + H2O + cellular proteinSide 1 = ADP + phosphate + cellular proteinSide 2.. In terms of biological role, part of the Sec protein translocase complex. Interacts with the SecYEG preprotein conducting channel. Has a central role in coupling the hydrolysis of ATP to the transfer of proteins into and across the cell membrane, serving both as a receptor for the preprotein-SecB complex and as an ATP-driven molecular motor driving the stepwise translocation of polypeptide chains across the membrane. In Escherichia fergusonii (strain ATCC 35469 / DSM 13698 / CCUG 18766 / IAM 14443 / JCM 21226 / LMG 7866 / NBRC 102419 / NCTC 12128 / CDC 0568-73), this protein is Protein translocase subunit SecA.